We begin with the raw amino-acid sequence, 367 residues long: Peptide chain release factor 2 (367 aa).

Residue glutamine 254 is modified to N5-methylglutamine.

Belongs to the prokaryotic/mitochondrial release factor family. Methylated by PrmC. Methylation increases the termination efficiency of RF2.

The protein resides in the cytoplasm. In terms of biological role, peptide chain release factor 2 directs the termination of translation in response to the peptide chain termination codons UGA and UAA. This is Peptide chain release factor 2 from Leptospira interrogans serogroup Icterohaemorrhagiae serovar Lai (strain 56601).